The following is a 552-amino-acid chain: HTH-type transcriptional regulator SgrR (552 aa).

The HTH marR-type domain occupies 1 to 116 (MPSGRLQQQF…LISHLGRSFR (116 aa)). The H-T-H motif DNA-binding region spans 26–49 (LNELADLLNCSRRHMRTLLNTMQA). The solute-binding stretch occupies residues 163 to 493 (ELEADIAHHW…RDWQGDAAQW (331 aa)).

Its function is as follows. Activates the small RNA gene sgrS under glucose-phosphate stress conditions as well as yfdZ. Represses its own transcription under both stress and non-stress conditions. Might act as a sensor of the intracellular accumulation of phosphoglucose by binding these molecules in its C-terminal solute-binding domain. The chain is HTH-type transcriptional regulator SgrR from Salmonella typhimurium (strain LT2 / SGSC1412 / ATCC 700720).